A 185-amino-acid polypeptide reads, in one-letter code: MNSLQNHLLIATPMLNDPMFKRTVTYICEHNEEGAMGLVINQPADLSVTSLLDKLEIVYPENNQHLQGSVYQGGPVGRERGFVIHPPQDNWRASQKMSDDIMVTTSRDILEALGSSAAPPQFLLTLGYAGWEAGQLEEELGENSWLAIPADPELLFNTPPSERWQKATEQLGFDVWQLGPDVGHA.

Belongs to the UPF0301 (AlgH) family.

This chain is UPF0301 protein IL2218, found in Idiomarina loihiensis (strain ATCC BAA-735 / DSM 15497 / L2-TR).